The following is a 156-amino-acid chain: SsrA-binding protein (156 aa).

Belongs to the SmpB family.

The protein localises to the cytoplasm. Required for rescue of stalled ribosomes mediated by trans-translation. Binds to transfer-messenger RNA (tmRNA), required for stable association of tmRNA with ribosomes. tmRNA and SmpB together mimic tRNA shape, replacing the anticodon stem-loop with SmpB. tmRNA is encoded by the ssrA gene; the 2 termini fold to resemble tRNA(Ala) and it encodes a 'tag peptide', a short internal open reading frame. During trans-translation Ala-aminoacylated tmRNA acts like a tRNA, entering the A-site of stalled ribosomes, displacing the stalled mRNA. The ribosome then switches to translate the ORF on the tmRNA; the nascent peptide is terminated with the 'tag peptide' encoded by the tmRNA and targeted for degradation. The ribosome is freed to recommence translation, which seems to be the essential function of trans-translation. The polypeptide is SsrA-binding protein (Staphylococcus haemolyticus (strain JCSC1435)).